A 176-amino-acid polypeptide reads, in one-letter code: L-2,4-diaminobutyric acid acetyltransferase (176 aa).

The 156-residue stretch at 16 to 171 folds into the N-acetyltransferase domain; it reads LSIDAPRVED…THLPEVLYRI (156 aa).

This sequence belongs to the acetyltransferase family. EctA subfamily.

The catalysed reaction is L-2,4-diaminobutanoate + acetyl-CoA = (2S)-4-acetamido-2-aminobutanoate + CoA + H(+). It participates in amine and polyamine biosynthesis; ectoine biosynthesis; L-ectoine from L-aspartate 4-semialdehyde: step 2/3. Its function is as follows. Catalyzes the acetylation of L-2,4-diaminobutyrate (DABA) to gamma-N-acetyl-alpha,gamma-diaminobutyric acid (ADABA) with acetyl coenzyme A. The polypeptide is L-2,4-diaminobutyric acid acetyltransferase (ectA) (Streptomyces anulatus (Streptomyces chrysomallus)).